The chain runs to 707 residues: Choline transporter-like protein 4 (707 aa).

At 1-32 (MGKKQKENEAYGNSAKYDPSFRGPIKNRGCTD) the chain is on the cytoplasmic side. A helical membrane pass occupies residues 33–53 (IICCVLFLVFILGYIVVGLVA). The Extracellular segment spans residues 54–227 (WVYGDPRQVL…KIFEDFAQSW (174 aa)). Residues Asn67, Asn185, Asn195, and Asn196 are each glycosylated (N-linked (GlcNAc...) asparagine). Residues 228–248 (YWILVALGVALVLSLLFILLL) traverse the membrane as a helical segment. Over 249–250 (RL) the chain is Cytoplasmic. The helical transmembrane segment at 251 to 271 (VAAPLVLLLIVGVLAVLAYGI) threads the bilayer. Over 272-307 (YHCWQQYRELRDQGVSITQLGFTANLSAYQNVKETW) the chain is Extracellular. Residue Asn296 is glycosylated (N-linked (GlcNAc...) asparagine). The chain crosses the membrane as a helical span at residues 308–328 (LAALIILAVLEGVLLLMLIFL). Residues 329 to 356 (RQRIRIAIALLKEASRAVGQMMSTMFYP) are Cytoplasmic-facing. Residues 357 to 377 (LVTFVLLVICIGYWAVTALYL) traverse the membrane as a helical segment. The Extracellular portion of the chain corresponds to 378–452 (ATSGQPQYVY…GILGLFWTVN (75 aa)). 3 N-linked (GlcNAc...) asparagine glycosylation sites follow: Asn391, Asn403, and Asn413. The chain crosses the membrane as a helical span at residues 453-473 (WVLALGQCVLAGAFASFYWAF). The Cytoplasmic portion of the chain corresponds to 474–498 (HKPRDIPTFPLSSAFIRTLRYHTGS). The helical transmembrane segment at 499-519 (LAFGALILTLVQIARVILEYI) threads the bilayer. Residues 520 to 557 (DHKLRGSQNPVARCIICCFKCCLWCLEKFIKFLNRNAY) are Extracellular-facing. A helical membrane pass occupies residues 558–578 (IMIAIYGKNFCVSAKNAFMLL). Over 579–594 (MRNVVRVVVLDKVTDL) the chain is Cytoplasmic. A helical membrane pass occupies residues 595-615 (LLFFGKLLVVGGVGVLSFFFF). Topologically, residues 616-635 (SGRIKGLGKDFKNPDLNYYW) are extracellular. The helical transmembrane segment at 636–656 (LPIMTSIMGAYVIASGFFSVF) threads the bilayer. Residues 657–707 (GMCVDTLFLCFLEDLERNDGSQERPYYMPKALLKILGKKNEVPTGGKNRKK) are Cytoplasmic-facing.

This sequence belongs to the CTL (choline transporter-like) family. N-glycosylated; N-glycosylation of Asn-67 and Asn-391 is required for a proper thiamine pyrophosphate uptake. Highly expressed in intestine, kidney and stomach. Also expressed in testis and lung.

The protein resides in the membrane. It is found in the apical cell membrane. The catalysed reaction is choline(out) + n H(+)(in) = choline(in) + n H(+)(out). The enzyme catalyses thiamine diphosphate(out) = thiamine diphosphate(in). In terms of biological role, choline transporter that plays a role in the choline-acetylcholine system and is required to the efferent innervation of hair cells in the olivocochlear bundle for the maintenance of physiological function of outer hair cells and the protection of hair cells from acoustic injury. Also described as a thiamine pyrophosphate transporter in colon, may mediate the absorption of microbiota-generated thiamine pyrophosphate and contribute to host thiamine (vitamin B1) homeostasis. The chain is Choline transporter-like protein 4 from Rattus norvegicus (Rat).